The following is a 372-amino-acid chain: Glutamate 5-kinase (372 aa).

Residue lysine 9 participates in ATP binding. Substrate contacts are provided by serine 49, aspartate 136, and asparagine 148. ATP-binding positions include 168–169 and 210–216; these read TD and TGGMKSK. The 78-residue stretch at 276 to 353 folds into the PUA domain; sequence AGSIEIDSGA…EEALSLTKRS (78 aa).

This sequence belongs to the glutamate 5-kinase family.

The protein localises to the cytoplasm. The enzyme catalyses L-glutamate + ATP = L-glutamyl 5-phosphate + ADP. It functions in the pathway amino-acid biosynthesis; L-proline biosynthesis; L-glutamate 5-semialdehyde from L-glutamate: step 1/2. Its function is as follows. Catalyzes the transfer of a phosphate group to glutamate to form L-glutamate 5-phosphate. In Shouchella clausii (strain KSM-K16) (Alkalihalobacillus clausii), this protein is Glutamate 5-kinase.